We begin with the raw amino-acid sequence, 1388 residues long: CRISPR-associated endonuclease Cas9 2 (1388 aa).

Asp-10 serves as the catalytic For RuvC-like nuclease domain. Asp-10, Glu-763, and Glu-767 together coordinate Mg(2+). Positions 771–928 (TNQGKSNSQQ…DKAGFIQRQL (158 aa)) constitute an HNH Cas9-type domain. His-847 serves as the catalytic Proton acceptor for HNH nuclease domain. A Mg(2+)-binding site is contributed by His-990. The segment covering 1100-1109 (EQNHGLDRGK) has biased composition (basic and acidic residues). The disordered stretch occupies residues 1100–1130 (EQNHGLDRGKPKGLFNANLSSKPKPNSNENL). The segment at 1102–1388 (NHGLDRGKPK…RIDLAKLGEG (287 aa)) is PAM-interacting domain (PI). The span at 1116–1129 (ANLSSKPKPNSNEN) shows a compositional bias: polar residues.

The protein belongs to the CRISPR-associated protein Cas9 family. Subtype II-A subfamily. Monomer. Binds crRNA and tracrRNA. It depends on Mg(2+) as a cofactor.

CRISPR (clustered regularly interspaced short palindromic repeat) is an adaptive immune system that provides protection against mobile genetic elements (viruses, transposable elements and conjugative plasmids). CRISPR clusters contain spacers, sequences complementary to antecedent mobile elements, and target invading nucleic acids. CRISPR clusters are transcribed and processed into CRISPR RNA (crRNA). In type II CRISPR systems correct processing of pre-crRNA requires a trans-encoded small RNA (tracrRNA), endogenous ribonuclease 3 (rnc) and this protein. The tracrRNA serves as a guide for ribonuclease 3-aided processing of pre-crRNA. Subsequently Cas9/crRNA/tracrRNA endonucleolytically cleaves linear or circular dsDNA target complementary to the spacer yielding blunt ends; Cas9 is inactive in the absence of the 2 guide RNAs (gRNA). Cas9 recognizes a 3'-G-rich protospacer adjacent motif (PAM, GGG in this organism) in the CRISPR repeat sequences to help distinguish self versus nonself, as targets within the bacterial CRISPR locus do not have PAMs. PAM recognition is also required for catalytic activity. Complements the gRNA coprocessing defect in a cas9 deletion in S.pyogenes strain 370, and cuts target DNA in Cas9:gRNAs mixing experiments with S.mutans strain UA159. The polypeptide is CRISPR-associated endonuclease Cas9 2 (Streptococcus thermophilus (strain ATCC BAA-491 / LMD-9)).